Reading from the N-terminus, the 412-residue chain is Class E basic helix-loop-helix protein 40 (412 aa).

Residues 1–139 form an essential for interaction with BMAL1, E-box binding and repressor activity against the CLOCK-BMAL1 heterodimer region; that stretch reads MERIPSAQPP…LSGRNVETGQ (139 aa). Residues 52 to 107 enclose the bHLH domain; that stretch reads TYKLPHRLIEKKRRDRINECIAQLKDLLPEHLKLTTLGHLEKAVVLELTLKHVKAL. A necessary for interaction with RXRA and repressor activity against RXRA region spans residues 75–79; that stretch reads LKDLL. In terms of domain architecture, Orange spans 142–175; sequence FCSGFQTCAREVLQYLAKHENTRDLKSSQLVTHL. Residue Lys-159 forms a Glycyl lysine isopeptide (Lys-Gly) (interchain with G-Cter in SUMO1, SUMO2 and SUMO3) linkage. Residue Lys-167 forms a Glycyl lysine isopeptide (Lys-Gly) (interchain with G-Cter in SUMO2) linkage. Disordered regions lie at residues 183 to 259 and 275 to 309; these read LQGG…SEQL and IGAIKQESEEPPTKKNRMQLSDDEGHFTSSDLISS. Ser-235 is subject to Phosphoserine. The segment covering 248–259 has biased composition (basic and acidic residues); the sequence is ESEKGDLRSEQL. Lys-279 is covalently cross-linked (Glycyl lysine isopeptide (Lys-Gly) (interchain with G-Cter in SUMO1); alternate). Lys-279 participates in a covalent cross-link: Glycyl lysine isopeptide (Lys-Gly) (interchain with G-Cter in SUMO1, SUMO2 and SUMO3); alternate. Lys-279 participates in a covalent cross-link: Glycyl lysine isopeptide (Lys-Gly) (interchain with G-Cter in SUMO2); alternate. Lys-288 is covalently cross-linked (Glycyl lysine isopeptide (Lys-Gly) (interchain with G-Cter in SUMO2)). Phosphoserine is present on Ser-383.

Homodimer. Heterodimer with BHLHE41/DEC2. Interacts with TCF3/E47. Interacts with ubiquitin-conjugating enzyme UBE2I/UBC9. Interacts with HDAC1, SUMO1, RXRA and BMAL1. Ubiquitinated; which may lead to proteasomal degradation. In terms of processing, sumoylation inhibits its ubiquitination and promotes its negative regulation of the CLOCK-BMAL1 heterodimer transcriptional activator activity.

The protein resides in the cytoplasm. It is found in the nucleus. In terms of biological role, transcriptional repressor involved in the regulation of the circadian rhythm by negatively regulating the activity of the clock genes and clock-controlled genes. Acts as the negative limb of a novel autoregulatory feedback loop (DEC loop) which differs from the one formed by the PER and CRY transcriptional repressors (PER/CRY loop). Both these loops are interlocked as it represses the expression of PER1/2 and in turn is repressed by PER1/2 and CRY1/2. Represses the activity of the circadian transcriptional activator: CLOCK-BMAL1|BMAL2 heterodimer by competing for the binding to E-box elements (5'-CACGTG-3') found within the promoters of its target genes. Negatively regulates its own expression and the expression of DBP and BHLHE41/DEC2. Acts as a corepressor of RXR and the RXR-LXR heterodimers and represses the ligand-induced RXRA and NR1H3/LXRA transactivation activity. May be involved in the regulation of chondrocyte differentiation via the cAMP pathway. Represses the transcription of NR0B2 and attentuates the transactivation of NR0B2 by the CLOCK-BMAL1 complex. Drives the circadian rhythm of blood pressure through transcriptional repression of ATP1B1 in the cardiovascular system. The polypeptide is Class E basic helix-loop-helix protein 40 (BHLHE40) (Pongo abelii (Sumatran orangutan)).